A 110-amino-acid chain; its full sequence is uncharacterized protein (110 aa).

Residues 88-108 (LTRICLLIFGIGLVVLIFLKL) traverse the membrane as a helical segment.

It is found in the membrane. This is an uncharacterized protein from Rickettsia prowazekii (strain Madrid E).